We begin with the raw amino-acid sequence, 101 residues long: NADH-quinone oxidoreductase subunit K (101 aa).

A run of 3 helical transmembrane segments spans residues 4–24 (LAHYLVLGAILFAIAIVGIFL), 30–50 (IIILMSIELMLLAVNTNFVAF), and 61–81 (IFVFFVLTVAAAEAAIGLAIL).

The protein belongs to the complex I subunit 4L family. In terms of assembly, NDH-1 is composed of 14 different subunits. Subunits NuoA, H, J, K, L, M, N constitute the membrane sector of the complex.

It is found in the cell inner membrane. The enzyme catalyses a quinone + NADH + 5 H(+)(in) = a quinol + NAD(+) + 4 H(+)(out). In terms of biological role, NDH-1 shuttles electrons from NADH, via FMN and iron-sulfur (Fe-S) centers, to quinones in the respiratory chain. The immediate electron acceptor for the enzyme in this species is believed to be ubiquinone. Couples the redox reaction to proton translocation (for every two electrons transferred, four hydrogen ions are translocated across the cytoplasmic membrane), and thus conserves the redox energy in a proton gradient. This is NADH-quinone oxidoreductase subunit K from Burkholderia cenocepacia (strain HI2424).